A 150-amino-acid polypeptide reads, in one-letter code: Cytochrome c oxidase subunit 5A, mitochondrial (150 aa).

Residues 1–41 (MLGTALRRCAVAAASRAGSRGLLHPTPVPGPTAAIQSIRCY) constitute a mitochondrion transit peptide. Positions 2–17 (LGTALRRCAVAAASRA) match the SIFI-degron motif. Residues Lys87 and Lys113 each carry the N6-acetyllysine modification. A Phosphothreonine modification is found at Thr141.

Belongs to the cytochrome c oxidase subunit 5A family. As to quaternary structure, component of the cytochrome c oxidase (complex IV, CIV), a multisubunit enzyme composed of 14 subunits. The complex is composed of a catalytic core of 3 subunits MT-CO1, MT-CO2 and MT-CO3, encoded in the mitochondrial DNA, and 11 supernumerary subunits COX4I, COX5A, COX5B, COX6A, COX6B, COX6C, COX7A, COX7B, COX7C, COX8 and NDUFA4, which are encoded in the nuclear genome. The complex exists as a monomer or a dimer and forms supercomplexes (SCs) in the inner mitochondrial membrane with NADH-ubiquinone oxidoreductase (complex I, CI) and ubiquinol-cytochrome c oxidoreductase (cytochrome b-c1 complex, complex III, CIII), resulting in different assemblies (supercomplex SCI(1)III(2)IV(1) and megacomplex MCI(2)III(2)IV(2)). Interacts with AFG1L. Interacts with RAB5IF. In terms of processing, in response to mitochondrial stress, the precursor protein is ubiquitinated by the SIFI complex in the cytoplasm before mitochondrial import, leading to its degradation. Within the SIFI complex, UBR4 initiates ubiquitin chain that are further elongated or branched by KCMF1.

It localises to the mitochondrion inner membrane. Its pathway is energy metabolism; oxidative phosphorylation. Functionally, component of the cytochrome c oxidase, the last enzyme in the mitochondrial electron transport chain which drives oxidative phosphorylation. The respiratory chain contains 3 multisubunit complexes succinate dehydrogenase (complex II, CII), ubiquinol-cytochrome c oxidoreductase (cytochrome b-c1 complex, complex III, CIII) and cytochrome c oxidase (complex IV, CIV), that cooperate to transfer electrons derived from NADH and succinate to molecular oxygen, creating an electrochemical gradient over the inner membrane that drives transmembrane transport and the ATP synthase. Cytochrome c oxidase is the component of the respiratory chain that catalyzes the reduction of oxygen to water. Electrons originating from reduced cytochrome c in the intermembrane space (IMS) are transferred via the dinuclear copper A center (CU(A)) of subunit 2 and heme A of subunit 1 to the active site in subunit 1, a binuclear center (BNC) formed by heme A3 and copper B (CU(B)). The BNC reduces molecular oxygen to 2 water molecules using 4 electrons from cytochrome c in the IMS and 4 protons from the mitochondrial matrix. This Otolemur crassicaudatus (Brown greater galago) protein is Cytochrome c oxidase subunit 5A, mitochondrial (COX5A).